Reading from the N-terminus, the 556-residue chain is Glutamine--tRNA ligase (556 aa).

The 'HIGH' region motif lies at 34–44; it reads PEPNGYLHIGH. ATP-binding positions include 35-37 and 41-47; these read EPN and HIGHAKS. L-glutamine is bound by residues Asp67 and Tyr212. Residues Thr231, 261–262, and 269–271 contribute to the ATP site; these read RL and MSK. A 'KMSKS' region motif is present at residues 268-272; the sequence is VMSKR.

It belongs to the class-I aminoacyl-tRNA synthetase family. Monomer.

It localises to the cytoplasm. It catalyses the reaction tRNA(Gln) + L-glutamine + ATP = L-glutaminyl-tRNA(Gln) + AMP + diphosphate. This is Glutamine--tRNA ligase from Vibrio campbellii (strain ATCC BAA-1116).